The primary structure comprises 507 residues: Flagellar hook-associated protein 1 (507 aa).

This sequence belongs to the flagella basal body rod proteins family.

It localises to the secreted. The protein resides in the bacterial flagellum. The chain is Flagellar hook-associated protein 1 (flgK) from Bacillus subtilis (strain 168).